We begin with the raw amino-acid sequence, 1172 residues long: WD repeat-containing protein 48 homolog (1172 aa).

Residues 1–115 (MYEYYSTGKI…HSYGGGGGGT (115 aa)) form a disordered region. Residues 13–36 (LPQQVDSNGINSKPMNSSPSTPIP) show a composition bias toward polar residues. Residues 37 to 63 (NNNNNNNNNNNNNNNNNNNNNNNNNNN) show a composition bias toward low complexity. The segment covering 64 to 89 (RNKSQQSFYLNNNNRNCGFSSPTKPQ) has biased composition (polar residues). Residues 90–107 (YNNNNNNNNNNNSNYNHS) are compositionally biased toward low complexity. WD repeat units lie at residues 152-202 (RHCF…GFKF), 208-246 (DHTDWVNDLFFNDSNILVSCSSDSTIKIWNTDSERCVNS), 249-548 (FHDD…SPMF), 560-599 (GEGISIYSLAIAQDASFVVSGSTERAIRGWDVRSGQKIFK), 602-641 (GHTDNIRSILLNDNSTRCLSASSDGTVRLWDIGEQRCIQV), 645-683 (LHTDSVWTLATNDSFSHFFSGGRDGMIFLTDLKTHQSRL), and 686-727 (RENE…NQSI). Positions 341 to 365 (ISTNNNNNNSSSSNNNNNNNNNNNN) are enriched in low complexity. Positions 341–544 (ISTNNNNNNS…NDNNNLNKKF (204 aa)) are disordered. 3 stretches are compositionally biased toward polar residues: residues 366–377 (GQTNTHENTAET), 388–408 (QLSSVNKNGIRSNLSNNNFRN), and 417–434 (PPSSVLNHTPKILSSNGR). The span at 435 to 485 (NVNNRENNNNNNNNNNNNNNNNNNNNNNNNNNNNNNNNNINNNNHENNGNV) shows a compositional bias: low complexity. Acidic residues predominate over residues 486–503 (DVDDEDDDDDDDDDDDDD). Basic and acidic residues predominate over residues 504-513 (CNKNKKKYDD). A compositionally biased stretch (low complexity) spans 514 to 543 (NNNNNNYNNNNNKKNNSNDNNNDNNNLNKK). Positions 745–769 (NNNNNNNNNNNNNNNNNNNNNNNNN) are enriched in low complexity. A disordered region spans residues 745 to 775 (NNNNNNNNNNNNNNNNNNNNNNNNNNREKLS). A WD 8 repeat occupies 794–833 (QGRAGIIKNQVLNNRRQVLTKDNDNNVQLWDITKGKEIES). The segment at 926–986 (ELNHSNDSVN…TNSTTPNSGR (61 aa)) is disordered. Residues 930-984 (SNDSVNSSLSSNTSGDNNNNNYNNYNNYNNNNNNGLQKSSSSSSIVSTNSTTPNS) show a composition bias toward low complexity.

It belongs to the WD repeat WDR48 family.

This is WD repeat-containing protein 48 homolog from Dictyostelium discoideum (Social amoeba).